The following is a 695-amino-acid chain: F-box only protein 34 (695 aa).

Disordered stretches follow at residues 239-275 (GQSR…QGEP), 316-373 (LTNG…CPSL), and 472-524 (GQDQ…PGGS). Residues 556-608 (QQYMACLPHHIIVKIFRLLPTLSLAILKCTCRYFKSIIEYYNIRPADSRWVRD) enclose the F-box domain.

In terms of assembly, directly interacts with SKP1 and CUL1.

Its function is as follows. Substrate-recognition component of the SCF (SKP1-CUL1-F-box protein)-type E3 ubiquitin ligase complex. The chain is F-box only protein 34 (Fbxo34) from Mus musculus (Mouse).